A 356-amino-acid chain; its full sequence is S-adenosylmethionine:tRNA ribosyltransferase-isomerase (356 aa).

It belongs to the QueA family. Monomer.

The protein resides in the cytoplasm. The catalysed reaction is 7-aminomethyl-7-carbaguanosine(34) in tRNA + S-adenosyl-L-methionine = epoxyqueuosine(34) in tRNA + adenine + L-methionine + 2 H(+). It functions in the pathway tRNA modification; tRNA-queuosine biosynthesis. Its function is as follows. Transfers and isomerizes the ribose moiety from AdoMet to the 7-aminomethyl group of 7-deazaguanine (preQ1-tRNA) to give epoxyqueuosine (oQ-tRNA). The protein is S-adenosylmethionine:tRNA ribosyltransferase-isomerase of Shigella boydii serotype 18 (strain CDC 3083-94 / BS512).